Consider the following 898-residue polypeptide: Serine/threonine-protein kinase TAO3 (898 aa).

The Protein kinase domain maps to 24-277; the sequence is FIGLHEIGHG…SAELLRHDFV (254 aa). ATP is bound by residues 30-38 and lysine 53; that span reads IGHGSFGAV. Aspartate 147 acts as the Proton acceptor in catalysis. Disordered stretches follow at residues 316-362 and 405-425; these read TRNG…SQSS and DEAG…VQSQ. Serine 324 carries the post-translational modification Phosphoserine; by ATM. Residues serine 331, serine 343, serine 346, and serine 349 each carry the phosphoserine modification. A compositionally biased stretch (polar residues) spans 334-351; sequence GTSLNREMDSLGSNHSIP. A compositionally biased stretch (low complexity) spans 352 to 362; sequence SMSVSTGSQSS. At threonine 357 the chain carries Phosphothreonine. Serine 359 bears the Phosphoserine mark. Basic and acidic residues predominate over residues 405–416; sequence DEAGHGDPRPEP. Serine 442 carries the post-translational modification Phosphoserine. Coiled-coil stretches lie at residues 452 to 502, 548 to 649, and 754 to 879; these read EQEN…THAN, FLES…HAML, and LKTL…DMES. The tract at residues 565 to 596 is disordered; it reads EEMNEDHSTPKKEKQERISKHKENLQHTQAEE. Position 830 is an N6-acetyllysine (lysine 830).

This sequence belongs to the protein kinase superfamily. STE Ser/Thr protein kinase family. STE20 subfamily. In terms of assembly, self-associates. Interacts with ERN1 and TRAF2. Interaction with TRAF2 is facilitated under ER stress conditions, such as treatment with tunicamycin, and may promote TRAF2 phosphorylation. Interacts (via N-terminus) with STK25; the interaction promotes STK25 abundance at the level of protein expression and/or stability. As to quaternary structure, (Microbial infection) Interacts with herpes simplex virus 1 UL37 protein. In terms of processing, autophosphorylated. Phosphorylation at Ser-324 by ATM following DNA damage is required for activation of the p38/MAPK14 stress-activated MAPK cascade. Phosphorylated at Ser-324 and on Tyr residues during T cell activation. Phosphorylated by LRRK2. Ubiquitously expressed at a low level, and highly expressed in peripheral blood leukocytes (PBLs), thymus, spleen, kidney, skeletal muscle, heart and liver.

It localises to the cytoplasm. Its subcellular location is the cell membrane. The protein resides in the membrane raft. It is found in the lipid droplet. The catalysed reaction is L-seryl-[protein] + ATP = O-phospho-L-seryl-[protein] + ADP + H(+). The enzyme catalyses L-threonyl-[protein] + ATP = O-phospho-L-threonyl-[protein] + ADP + H(+). Its function is as follows. Serine/threonine-protein kinase that acts as a regulator of the p38/MAPK14 stress-activated MAPK cascade and of the MAPK8/JNK cascade. In response to DNA damage, involved in the G2/M transition DNA damage checkpoint by activating the p38/MAPK14 stress-activated MAPK cascade, probably by mediating phosphorylation of upstream MAP2K3 and MAP2K6 kinases. Inhibits basal activity of the MAPK8/JNK cascade and diminishes its activation in response to epidermal growth factor (EGF). Positively regulates canonical T cell receptor (TCR) signaling by preventing early PTPN6/SHP1-mediated inactivation of LCK, ensuring sustained TCR signaling that is required for optimal activation and differentiation of T cells. Phosphorylates PTPN6/SHP1 on 'Thr-394', leading to its polyubiquitination and subsequent proteasomal degradation. Required for cell surface expression of metalloprotease ADAM10 on type 1 transitional B cells which is necessary for their NOTCH-mediated development into marginal zone B cells. Also required for the NOTCH-mediated terminal differentiation of splenic conventional type 2 dendritic cells. Positively regulates osteoblast differentiation by acting as an upstream activator of the JNK pathway. Promotes JNK signaling in hepatocytes and positively regulates hepatocyte lipid storage by inhibiting beta-oxidation and triacylglycerol secretion while enhancing lipid synthesis. Restricts age-associated inflammation by negatively regulating differentiation of macrophages and their production of pro-inflammatory cytokines. Plays a role in negatively regulating the abundance of regulatory T cells in white adipose tissue. The chain is Serine/threonine-protein kinase TAO3 (TAOK3) from Homo sapiens (Human).